The sequence spans 424 residues: UDP-N-acetylglucosamine 1-carboxyvinyltransferase (424 aa).

Residue 22–23 participates in phosphoenolpyruvate binding; sequence KN. Arginine 93 is a UDP-N-acetyl-alpha-D-glucosamine binding site. Cysteine 117 serves as the catalytic Proton donor. At cysteine 117 the chain carries 2-(S-cysteinyl)pyruvic acid O-phosphothioketal. UDP-N-acetyl-alpha-D-glucosamine is bound by residues 162–165, aspartate 307, and isoleucine 329; that span reads KVSV.

This sequence belongs to the EPSP synthase family. MurA subfamily.

It localises to the cytoplasm. It catalyses the reaction phosphoenolpyruvate + UDP-N-acetyl-alpha-D-glucosamine = UDP-N-acetyl-3-O-(1-carboxyvinyl)-alpha-D-glucosamine + phosphate. Its pathway is cell wall biogenesis; peptidoglycan biosynthesis. Its function is as follows. Cell wall formation. Adds enolpyruvyl to UDP-N-acetylglucosamine. The chain is UDP-N-acetylglucosamine 1-carboxyvinyltransferase from Glaesserella parasuis serovar 5 (strain SH0165) (Haemophilus parasuis).